Consider the following 37-residue polypeptide: Desulforedoxin (37 aa).

Fe cation-binding residues include C10, C13, C29, and C30.

This sequence to the N-terminal section of desulfoferrodoxin. Homodimer. Fe cation is required as a cofactor.

Functionally, nonheme iron protein possibly involved in electron transport. In Megalodesulfovibrio gigas (Desulfovibrio gigas), this protein is Desulforedoxin (dsr).